The primary structure comprises 572 residues: Proline--tRNA ligase (572 aa).

Belongs to the class-II aminoacyl-tRNA synthetase family. ProS type 1 subfamily. Homodimer.

It is found in the cytoplasm. The catalysed reaction is tRNA(Pro) + L-proline + ATP = L-prolyl-tRNA(Pro) + AMP + diphosphate. Functionally, catalyzes the attachment of proline to tRNA(Pro) in a two-step reaction: proline is first activated by ATP to form Pro-AMP and then transferred to the acceptor end of tRNA(Pro). As ProRS can inadvertently accommodate and process non-cognate amino acids such as alanine and cysteine, to avoid such errors it has two additional distinct editing activities against alanine. One activity is designated as 'pretransfer' editing and involves the tRNA(Pro)-independent hydrolysis of activated Ala-AMP. The other activity is designated 'posttransfer' editing and involves deacylation of mischarged Ala-tRNA(Pro). The misacylated Cys-tRNA(Pro) is not edited by ProRS. The chain is Proline--tRNA ligase from Enterococcus faecalis (strain ATCC 700802 / V583).